The primary structure comprises 710 residues: Interleukin-1 receptor-associated kinase 1 (710 aa).

Residues 27–106 (MCRFYKVMDA…DIITAWHPPA (80 aa)) form the Death domain. Threonine 66 is modified (phosphothreonine; by PKC/PRKCI). The interval 107-133 (PVVPPSTAAPRPSSISAGSEAGDWSPR) is disordered. Residues 110–211 (PPSTAAPRPS…FCEISQGTCN (102 aa)) are proST region. A compositionally biased stretch (low complexity) spans 111 to 123 (PSTAAPRPSSISA). Serine 131 is modified (phosphoserine). Residues lysine 134 and lysine 180 each participate in a glycyl lysine isopeptide (Lys-Gly) (interchain with G-Cter in ubiquitin) cross-link. The interval 169–190 (PPLPSSAPSSTKSSPESPVSGL) is disordered. Low complexity predominate over residues 174-188 (SAPSSTKSSPESPVS). A Phosphothreonine; by IRAK4 modification is found at threonine 209. The region spanning 212–521 (FSEELRIGEG…TQVYKRLEGL (310 aa)) is the Protein kinase domain. ATP is bound by residues 218-226 (IGEGGFGCV) and lysine 239. The Proton acceptor role is filled by aspartate 340. ATP is bound by residues 342–345 (KSSN) and aspartate 358. Serine 375 is subject to Phosphoserine. Position 387 is a phosphothreonine (threonine 387). Disordered regions lie at residues 527–655 (WELE…SEPP) and 689–710 (FPGL…EFQS). Residues 537 to 553 (PSPQENSYMSTTGSAQS) show a composition bias toward polar residues. Residue serine 553 is modified to Phosphoserine. A compositionally biased stretch (low complexity) spans 567–576 (APAQAAQQLQ). Polar residues predominate over residues 616–639 (SCTQGGTTRESSVRSSPGFQPTTM). Positions 640-654 (EGSPTGSSSLLSSEP) are enriched in low complexity.

It belongs to the protein kinase superfamily. TKL Ser/Thr protein kinase family. Pelle subfamily. Homodimer. Forms a complex with TRAF6, PELI1, IRAK4 and MYD88. Direct binding of SMAD6 to PELI1 prevents complex formation and hence negatively regulates IL1R-TLR signaling and eventually NF-kappa-B-mediated gene expression. The TRAF6-PELI1-IRAK4-MYD88 complex recruits MAP3K7/TAK1, TAB1 and TAB2 to mediate NF-kappa-B activation. Interaction with MYD88 recruits IRAK1 to the stimulated receptor complex. Interacts with TOLLIP; this interaction occurs in the cytosol prior to receptor activation. Interacts with IL1RL1. Interacts (when polyubiquitinated) with IKBKG/NEMO. Interacts with RSAD2/viperin. Interacts with IRAK1BP1. Interacts with PELI2. Interacts with ZC3H12A; this interaction increases the interaction between ZC3H12A and IKBKB/IKKB. Interacts with IRAK4. Interacts with PELI3. Interacts with PELI1 and TRAF6. Interacts with INAVA; the interaction takes place upon PRR stimulation. Interacts (via C-terminus) with NFATC4 (via N-terminus). The cofactor is Mg(2+). Post-translationally, following recruitment on the activated receptor complex, phosphorylated on Thr-209, probably by IRAK4, resulting in a conformational change of the kinase domain, allowing further phosphorylations to take place. Thr-387 phosphorylation in the activation loop is required to achieve full enzymatic activity. Polyubiquitinated by TRAF6 after cell stimulation with IL-1-beta by PELI1, PELI2 and PELI3. Polyubiquitination occurs with polyubiquitin chains linked through 'Lys-63'. Ubiquitination promotes interaction with NEMO/IKBKG. Also sumoylated; leading to nuclear translocation. In terms of tissue distribution, highly expressed in liver, followed by kidney and skeletal muscle.

The protein localises to the cytoplasm. It localises to the nucleus. It is found in the lipid droplet. It catalyses the reaction L-seryl-[protein] + ATP = O-phospho-L-seryl-[protein] + ADP + H(+). The enzyme catalyses L-threonyl-[protein] + ATP = O-phospho-L-threonyl-[protein] + ADP + H(+). Functionally, serine/threonine-protein kinase that plays a critical role in initiating innate immune response against foreign pathogens. Involved in Toll-like receptor (TLR) and IL-1R signaling pathways. Is rapidly recruited by MYD88 to the receptor-signaling complex upon TLR activation. Association with MYD88 leads to IRAK1 phosphorylation by IRAK4 and subsequent autophosphorylation and kinase activation. Phosphorylates E3 ubiquitin ligases Pellino proteins (PELI1, PELI2 and PELI3) to promote pellino-mediated polyubiquitination of IRAK1. Then, the ubiquitin-binding domain of IKBKG/NEMO binds to polyubiquitinated IRAK1 bringing together the IRAK1-MAP3K7/TAK1-TRAF6 complex and the NEMO-IKKA-IKKB complex. In turn, MAP3K7/TAK1 activates IKKs (CHUK/IKKA and IKBKB/IKKB) leading to NF-kappa-B nuclear translocation and activation. Alternatively, phosphorylates TIRAP to promote its ubiquitination and subsequent degradation. Phosphorylates the interferon regulatory factor 7 (IRF7) to induce its activation and translocation to the nucleus, resulting in transcriptional activation of type I IFN genes, which drive the cell in an antiviral state. When sumoylated, translocates to the nucleus and phosphorylates STAT3. This Mus musculus (Mouse) protein is Interleukin-1 receptor-associated kinase 1 (Irak1).